Reading from the N-terminus, the 307-residue chain is Lipoyl synthase (307 aa).

[4Fe-4S] cluster-binding residues include cysteine 55, cysteine 60, cysteine 66, cysteine 81, cysteine 85, cysteine 88, and serine 292. One can recognise a Radical SAM core domain in the interval 67-281; that stretch reads WEDREATFLI…ARHAEELGFS (215 aa).

It belongs to the radical SAM superfamily. Lipoyl synthase family. [4Fe-4S] cluster is required as a cofactor.

It is found in the cytoplasm. The enzyme catalyses [[Fe-S] cluster scaffold protein carrying a second [4Fe-4S](2+) cluster] + N(6)-octanoyl-L-lysyl-[protein] + 2 oxidized [2Fe-2S]-[ferredoxin] + 2 S-adenosyl-L-methionine + 4 H(+) = [[Fe-S] cluster scaffold protein] + N(6)-[(R)-dihydrolipoyl]-L-lysyl-[protein] + 4 Fe(3+) + 2 hydrogen sulfide + 2 5'-deoxyadenosine + 2 L-methionine + 2 reduced [2Fe-2S]-[ferredoxin]. It functions in the pathway protein modification; protein lipoylation via endogenous pathway; protein N(6)-(lipoyl)lysine from octanoyl-[acyl-carrier-protein]: step 2/2. Functionally, catalyzes the radical-mediated insertion of two sulfur atoms into the C-6 and C-8 positions of the octanoyl moiety bound to the lipoyl domains of lipoate-dependent enzymes, thereby converting the octanoylated domains into lipoylated derivatives. This chain is Lipoyl synthase, found in Mycolicibacterium paratuberculosis (strain ATCC BAA-968 / K-10) (Mycobacterium paratuberculosis).